Reading from the N-terminus, the 376-residue chain is Alpha-2,8-sialyltransferase 8E (376 aa).

The Cytoplasmic segment spans residues 1 to 17 (MRYADPSANRDLLGSRT). A helical; Signal-anchor for type II membrane protein membrane pass occupies residues 18 to 38 (LLFIFICAFALVTLLQQILYG). Residues 39 to 376 (RNYIKRYFEF…RVHTGTCSCC (338 aa)) lie on the Lumenal side of the membrane. N-linked (GlcNAc...) asparagine glycans are attached at residues Asn56 and Asn96. 2 disulfide bridges follow: Cys164-Cys313 and Cys178-Cys373. Residues Asn192 and 214-216 (NPS) contribute to the substrate site. 2 N-linked (GlcNAc...) asparagine glycosylation sites follow: Asn241 and Asn284. 300–302 (STG) provides a ligand contact to substrate. The active-site Proton donor/acceptor is His348.

It belongs to the glycosyltransferase 29 family. In terms of tissue distribution, expressed in fetal and adult brain, adult heart and skeletal muscle. Expressed in fetal and adult brain, not detected in adult heart and skeletal muscle.

Its subcellular location is the golgi apparatus membrane. It carries out the reaction a ganglioside GT1b (d18:1(4E)) + CMP-N-acetyl-beta-neuraminate = a ganglioside GQ1b (d18:1(4E)) + CMP + H(+). The catalysed reaction is a ganglioside GD3 (d18:1(4E)) + CMP-N-acetyl-beta-neuraminate = a ganglioside GT3 (d18:1(4E)) + CMP + H(+). It catalyses the reaction a ganglioside GD1a (d18:1(4E)) + CMP-N-acetyl-beta-neuraminate = a ganglioside GT1a (d18:1(4E)) + CMP + H(+). The enzyme catalyses a ganglioside GM1b (d18:1(4E)) + CMP-N-acetyl-beta-neuraminate = a ganglioside GD1c (d18:1(4E)) + CMP + H(+). It carries out the reaction a ganglioside GQ1c (d18:1(4E)) + CMP-N-acetyl-beta-neuraminate = a ganglioside GP1c (d18:1(4E)) + CMP + H(+). The protein operates within protein modification; protein glycosylation. Its function is as follows. Involved in the synthesis of gangliosides GD1c, GT1a, GQ1b, GP1c and GT3 from GD1a, GT1b, GM1b and GD3 respectively. This Homo sapiens (Human) protein is Alpha-2,8-sialyltransferase 8E.